The following is a 209-amino-acid chain: Probable nicotinate-nucleotide adenylyltransferase (209 aa).

This sequence belongs to the NadD family.

The catalysed reaction is nicotinate beta-D-ribonucleotide + ATP + H(+) = deamido-NAD(+) + diphosphate. Its pathway is cofactor biosynthesis; NAD(+) biosynthesis; deamido-NAD(+) from nicotinate D-ribonucleotide: step 1/1. In terms of biological role, catalyzes the reversible adenylation of nicotinate mononucleotide (NaMN) to nicotinic acid adenine dinucleotide (NaAD). This chain is Probable nicotinate-nucleotide adenylyltransferase, found in Hydrogenovibrio crunogenus (strain DSM 25203 / XCL-2) (Thiomicrospira crunogena).